Here is a 567-residue protein sequence, read N- to C-terminus: MSGVNNTSANDLSTTESNSNSVANAPSVKTEHNDSKNSLNLDATEPPIDLPQKPLSAYTTVAILCLMIAFGGFIFGWDTGTISGFVNLSDFIRRFGQKNDKGTYYLSKVRMGLIVSIFNIGCAIGGIVLSKVGDIYGRRIGLITVTAIYVVGILIQITSINKWYQYFIGRIISGLGVGGIAVLSPMLISEVAPKQIRGTLVQLYQLMCTMGIFLGYCTNYGTKNYHNATQWRVGLGLCFAWTTFMVSGMMFVPESPRYLIEVGKDEEAKRSLSKSNKVSVDDPALLAEYDTIKAGIELEKLAGNASWSELLSTKTKVFQRVLMGVMIQSLQQLTGDNYFFYYGTTIFKSVGLKDSFQTSIIIGVVNFFSSFIAVYTIERFGRRTCLLWGAASMLCCFAVFASVGVTKLWPQGSSHQDITSQGAGNCMIVFTMFFIFSFATTWAGGCYVIVSETFPLRVKSRGMAIATAANWMWGFLISFFTPFITGAINFYYGYVFLGCLVFAYFYVFFFVPETKGLTLEEVNTMWLEGVPAWKSASWVPPERRTADYDADAIDHDDRPIYKRFFSS.

Residues 1-16 (MSGVNNTSANDLSTTE) show a composition bias toward polar residues. A disordered region spans residues 1 to 45 (MSGVNNTSANDLSTTESNSNSVANAPSVKTEHNDSKNSLNLDATE). Residues 1–56 (MSGVNNTSANDLSTTESNSNSVANAPSVKTEHNDSKNSLNLDATEPPIDLPQKPLS) lie on the Cytoplasmic side of the membrane. Positions 17 to 28 (SNSNSVANAPSV) are enriched in low complexity. The chain crosses the membrane as a helical span at residues 57–77 (AYTTVAILCLMIAFGGFIFGW). The Extracellular segment spans residues 78 to 112 (DTGTISGFVNLSDFIRRFGQKNDKGTYYLSKVRMG). N-linked (GlcNAc...) asparagine glycosylation is present at Asn87. A helical membrane pass occupies residues 113–133 (LIVSIFNIGCAIGGIVLSKVG). Topologically, residues 134 to 139 (DIYGRR) are cytoplasmic. Residues 140–160 (IGLITVTAIYVVGILIQITSI) traverse the membrane as a helical segment. Over 161–170 (NKWYQYFIGR) the chain is Extracellular. A helical transmembrane segment spans residues 171 to 191 (IISGLGVGGIAVLSPMLISEV). The Cytoplasmic segment spans residues 192-197 (APKQIR). Residues 198 to 218 (GTLVQLYQLMCTMGIFLGYCT) traverse the membrane as a helical segment. The Extracellular segment spans residues 219 to 232 (NYGTKNYHNATQWR). A glycan (N-linked (GlcNAc...) asparagine) is linked at Asn227. A helical membrane pass occupies residues 233 to 253 (VGLGLCFAWTTFMVSGMMFVP). Residues 254–336 (ESPRYLIEVG…IQSLQQLTGD (83 aa)) are Cytoplasmic-facing. Residues 337–353 (NYFFYYGTTIFKSVGLK) form a helical membrane-spanning segment. At 354–359 (DSFQTS) the chain is on the extracellular side. A helical membrane pass occupies residues 360 to 377 (IIIGVVNFFSSFIAVYTI). The Cytoplasmic segment spans residues 378 to 384 (ERFGRRT). A helical membrane pass occupies residues 385-405 (CLLWGAASMLCCFAVFASVGV). The Extracellular portion of the chain corresponds to 406–429 (TKLWPQGSSHQDITSQGAGNCMIV). The chain crosses the membrane as a helical span at residues 430–450 (FTMFFIFSFATTWAGGCYVIV). Residues 451-467 (SETFPLRVKSRGMAIAT) lie on the Cytoplasmic side of the membrane. A helical transmembrane segment spans residues 468-488 (AANWMWGFLISFFTPFITGAI). Asn489 is a topological domain (extracellular). The helical transmembrane segment at 490–510 (FYYGYVFLGCLVFAYFYVFFF) threads the bilayer. Residues 511–567 (VPETKGLTLEEVNTMWLEGVPAWKSASWVPPERRTADYDADAIDHDDRPIYKRFFSS) lie on the Cytoplasmic side of the membrane.

The protein belongs to the major facilitator superfamily. Sugar transporter (TC 2.A.1.1) family.

The protein localises to the membrane. In terms of biological role, probable glucose transporter. The polypeptide is Hexose transporter HXT9 (HXT9) (Saccharomyces cerevisiae (strain ATCC 204508 / S288c) (Baker's yeast)).